Reading from the N-terminus, the 515-residue chain is E3 ubiquitin-protein ligase RNF217 (515 aa).

Disordered regions lie at residues 1–125 and 147–189; these read MGEE…VLAQ and PEAP…ADPL. Gly residues predominate over residues 10-22; it reads GSGGARASGGGSA. Composition is skewed to low complexity over residues 39-49 and 147-157; these read GPRAAASSSRP and PEAPSAESPSP. Residues 158–178 are compositionally biased toward pro residues; sequence SESPPQAPLGPIPASPPPSFP. Residues 179-189 are compositionally biased toward low complexity; that stretch reads SSPLSLPADPL. Residues 232–451 are TRIAD supradomain; sequence MVLMCRVCLE…LSIFGCKYRY (220 aa). Zn(2+) contacts are provided by C236, C239, C256, C259, C356, C359, H364, C369, C396, and C399. An RING-type 1 zinc finger spans residues 236–282; that stretch reads CRVCLEDKPIKPLPCCKKAVCEECLKIYLSSQVQLGQVEIKCPVTEC. Residues 301–369 form an IBR-type zinc finger; the sequence is IKYKYFLELG…HSPWHEGVNC (69 aa). The RING-type 2; atypical zinc finger occupies 396–425; the sequence is CPKCKIHIQRTEGCDHMTCSQCNTNFCYRC. C409 is an active-site residue. Zn(2+) is bound by residues C414, C417, C422, C425, H438, and C447. The helical transmembrane segment at 476–496 threads the bilayer; that stretch reads LILVLGLALGAIAVVIGLFVF.

Belongs to the RBR family. RNF217 subfamily. Interacts with HAX1.

The protein localises to the membrane. It localises to the cytoplasm. It catalyses the reaction [E2 ubiquitin-conjugating enzyme]-S-ubiquitinyl-L-cysteine + [acceptor protein]-L-lysine = [E2 ubiquitin-conjugating enzyme]-L-cysteine + [acceptor protein]-N(6)-ubiquitinyl-L-lysine.. The protein operates within protein modification; protein ubiquitination. Its function is as follows. E3 ubiquitin-protein ligase which accepts ubiquitin from E2 ubiquitin-conjugating enzymes in the form of a thioester and then directly transfers the ubiquitin to targeted substrates. Mediates the degradation of the iron exporter ferroportin/SLC40A1 and thus regulates iron homeostasis. The chain is E3 ubiquitin-protein ligase RNF217 (Rnf217) from Mus musculus (Mouse).